A 371-amino-acid polypeptide reads, in one-letter code: Large ribosomal subunit protein bL27m (371 aa).

Residues 1-27 constitute a mitochondrion transit peptide; that stretch reads MWNPILLDTSSFSFQKHVSGVFLQVRN.

It belongs to the bacterial ribosomal protein bL27 family. Component of the mitochondrial large ribosomal subunit (mt-LSU). Mature yeast 74S mitochondrial ribosomes consist of a small (37S) and a large (54S) subunit. The 37S small subunit contains a 15S ribosomal RNA (15S mt-rRNA) and 34 different proteins. The 54S large subunit contains a 21S rRNA (21S mt-rRNA) and 46 different proteins.

Its subcellular location is the mitochondrion. Component of the mitochondrial ribosome (mitoribosome), a dedicated translation machinery responsible for the synthesis of mitochondrial genome-encoded proteins, including at least some of the essential transmembrane subunits of the mitochondrial respiratory chain. The mitoribosomes are attached to the mitochondrial inner membrane and translation products are cotranslationally integrated into the membrane. The protein is Large ribosomal subunit protein bL27m (MRP7) of Saccharomyces cerevisiae (strain ATCC 204508 / S288c) (Baker's yeast).